Reading from the N-terminus, the 350-residue chain is Small ribosomal subunit biogenesis GTPase RsgA (350 aa).

The segment at 1 to 30 is disordered; the sequence is MSKRKLTQNQQRRIQSNNAKTLHRHQHRHK. Over residues 7–20 the composition is skewed to polar residues; that stretch reads TQNQQRRIQSNNAK. Residues 21 to 30 are compositionally biased toward basic residues; that stretch reads TLHRHQHRHK. The CP-type G domain occupies 106 to 274; sequence HNQIVRPDYY…LIDSPGIREF (169 aa). GTP contacts are provided by residues 162 to 165 and 216 to 224; these read NKAD and GQSGVGKSS. Residues Cys-298, Cys-303, His-305, and Cys-311 each contribute to the Zn(2+) site.

It belongs to the TRAFAC class YlqF/YawG GTPase family. RsgA subfamily. In terms of assembly, monomer. Associates with 30S ribosomal subunit, binds 16S rRNA. The cofactor is Zn(2+).

It is found in the cytoplasm. Functionally, one of several proteins that assist in the late maturation steps of the functional core of the 30S ribosomal subunit. Helps release RbfA from mature subunits. May play a role in the assembly of ribosomal proteins into the subunit. Circularly permuted GTPase that catalyzes slow GTP hydrolysis, GTPase activity is stimulated by the 30S ribosomal subunit. The chain is Small ribosomal subunit biogenesis GTPase RsgA from Histophilus somni (strain 129Pt) (Haemophilus somnus).